A 1088-amino-acid chain; its full sequence is Receptor-type guanylate cyclase gcy-17 (1088 aa).

The N-terminal stretch at 1-20 (MLFLRLFIFTPFLILANCQA) is a signal peptide. Topologically, residues 21–480 (RRTIKVGLLF…PPDFVRDYLV (460 aa)) are extracellular. 7 N-linked (GlcNAc...) asparagine glycosylation sites follow: Asn33, Asn235, Asn251, Asn321, Asn381, Asn419, and Asn434. Residues 481-501 (IVIIIVMFLIFAVSAAVGAVF) form a helical membrane-spanning segment. Residues 502-1088 (YAIRQKRKEI…SMARSITPEI (587 aa)) lie on the Cytoplasmic side of the membrane. Positions 529–552 (SKKSKSEASQRSFASGPSTSTKLT) are disordered. Residues 535–552 (EASQRSFASGPSTSTKLT) are compositionally biased toward polar residues. The Protein kinase domain occupies 535-824 (EASQRSFASG…KGNLMDHVFN (290 aa)). Residues 826–854 (LETYASTLEEEVNERTKELVEEQKKSDVL) are a coiled coil. The region spanning 882-1012 (TIFFSDVVQF…DAVNTASRME (131 aa)) is the Guanylate cyclase domain. Positions 1069–1088 (SNMRKRENTPSMARSITPEI) are disordered.

It belongs to the adenylyl cyclase class-4/guanylyl cyclase family. As to expression, expressed in PHA sensory neurons.

The protein resides in the cell membrane. It catalyses the reaction GTP = 3',5'-cyclic GMP + diphosphate. In terms of biological role, guanylate cyclase involved in the production of the second messenger cGMP. The protein is Receptor-type guanylate cyclase gcy-17 of Caenorhabditis elegans.